Reading from the N-terminus, the 458-residue chain is MTHEKLWGGRFSEPTDKFVEEFTASIDFDKRLYHQDIRGSIAHARMLGKQGIIPMEDVEKITAGLQEILRQIQGGQFKFSVALEDIHMNIEARLSEKIGEAGKRLHTGRSRNDQVALDIRLYLRDEIVEVSAYLDLLVDSLISQAEKNLGVIMPGYTHLQTAQPILFSHHMMAYVEMFSRDKGRMEDCLRRMNVLPLGAGALAGTTFPIDREHVAEILDFPEVTRNSLDSVSDRDFALEFMAASSILMMHLSRFSEELILWSTSEFKFVDLSDSFCTGSSIMPQKKNPDVPELVRGKTGRVYGNLMALLTVMKALPLAYNKDMQEDKEPLFDTIDTVKGSLKIFADMVGEMRINTGNMRAAAAKGFSTATDVADYLVRKGMPFRDAHEVVGKTVAYCLSNGKDLPDLTLGEWQGFSDKIGEDIFGCITLEASVNARSATGGTALERVKAEIARVKAGR.

Belongs to the lyase 1 family. Argininosuccinate lyase subfamily.

The protein resides in the cytoplasm. It carries out the reaction 2-(N(omega)-L-arginino)succinate = fumarate + L-arginine. It functions in the pathway amino-acid biosynthesis; L-arginine biosynthesis; L-arginine from L-ornithine and carbamoyl phosphate: step 3/3. The protein is Argininosuccinate lyase of Geobacter metallireducens (strain ATCC 53774 / DSM 7210 / GS-15).